Consider the following 79-residue polypeptide: Acyl carrier protein (79 aa).

The Carrier domain occupies S2–Q77. S37 is subject to O-(pantetheine 4'-phosphoryl)serine.

It belongs to the acyl carrier protein (ACP) family. Post-translationally, 4'-phosphopantetheine is transferred from CoA to a specific serine of apo-ACP by AcpS. This modification is essential for activity because fatty acids are bound in thioester linkage to the sulfhydryl of the prosthetic group.

It localises to the cytoplasm. The protein operates within lipid metabolism; fatty acid biosynthesis. Functionally, carrier of the growing fatty acid chain in fatty acid biosynthesis. The polypeptide is Acyl carrier protein (Paracidovorax citrulli (strain AAC00-1) (Acidovorax citrulli)).